The chain runs to 312 residues: Carbonic anhydrase 4 (312 aa).

The signal sequence occupies residues 1–18; it reads MRMLLALLALSAARPSAS. One can recognise an Alpha-carbonic anhydrase domain in the interval 21–285; that stretch reads SHWCYEVQAE…LGQRTVIKSG (265 aa). 2 disulfide bridges follow: Cys24-Cys36 and Cys46-Cys229. The active-site Proton donor/acceptor is His88. The Zn(2+) site is built by His115, His117, and His140. Residue 225-226 coordinates substrate; the sequence is TT. Residue Ser284 is the site of GPI-anchor amidated serine attachment. A propeptide spans 285–312 (removed in mature form); it reads GAPGRPLPWALPALLGPMLACLLAGFLR.

Belongs to the alpha-carbonic anhydrase family. Interacts with SLC4A4. Zn(2+) serves as cofactor. In terms of tissue distribution, expressed in the endothelium of the choriocapillaris in eyes (at protein level). Not expressed in the retinal epithelium at detectable levels.

It localises to the cell membrane. It catalyses the reaction hydrogencarbonate + H(+) = CO2 + H2O. With respect to regulation, activated by histamine, L-adrenaline, D-phenylalanine, L- and D-histidine. Inhibited by coumarins, saccharin, sulfonamide derivatives such as acetazolamide and Foscarnet (phosphonoformate trisodium salt). In terms of biological role, catalyzes the reversible hydration of carbon dioxide into bicarbonate and protons and thus is essential to maintaining intracellular and extracellular pH. May stimulate the sodium/bicarbonate transporter activity of SLC4A4 that acts in pH homeostasis. It is essential for acid overload removal from the retina and retina epithelium, and acid release in the choriocapillaris in the choroid. This chain is Carbonic anhydrase 4, found in Homo sapiens (Human).